We begin with the raw amino-acid sequence, 586 residues long: Cryptochrome-1 (586 aa).

The 130-residue stretch at 3–132 folds into the Photolyase/cryptochrome alpha/beta domain; sequence VNAVHWFRKG…EVIVRISHTL (130 aa). A Glycyl lysine isopeptide (Lys-Gly) (interchain with G-Cter in ubiquitin) cross-link involves residue lysine 11. Positions 50–54 match the LIR 1 motif; that stretch reads NRWRF. Serine 71 bears the Phosphoserine; by AMPK mark. An LIR 2 motif is present at residues 82 to 87; it reads DVFPRL. Residue lysine 107 forms a Glycyl lysine isopeptide (Lys-Gly) (interchain with G-Cter in ubiquitin) linkage. The short motif at 151 to 156 is the LIR 3 element; it reads KRFQTL. A Glycyl lysine isopeptide (Lys-Gly) (interchain with G-Cter in ubiquitin) cross-link involves residue lysine 159. A Phosphoserine; by MAPK modification is found at serine 247. Serine 252 provides a ligand contact to FAD. 2 short sequence motifs (LIR) span residues 255-260 and 271-276; these read LRFGCL and DLYKKV. Residue serine 280 is modified to Phosphoserine; by AMPK. The LIR 6 motif lies at 285–290; that stretch reads SLYGQL. Glutamine 289 serves as a coordination point for FAD. Lysine 329 participates in a covalent cross-link: Glycyl lysine isopeptide (Lys-Gly) (interchain with G-Cter in ubiquitin). An LIR 7 motif is present at residues 335–339; the sequence is TGFPW. Histidine 355 lines the FAD pocket. A required for inhibition of CLOCK-BMAL1-mediated transcription region spans residues 371-470; sequence WISWEEGMKV…LIGINYPKPM (100 aa). The LIR 8 motif lies at 379–384; the sequence is KVFEEL. Residue 387 to 389 participates in FAD binding; the sequence is DAD. 3 consecutive short sequence motifs (LIR) follow at residues 395 to 400, 411 to 416, and 430 to 435; these read GSWMWL, HCYCPV, and RRYLPV. Residues 471–493 are interaction with TIMELESS; that stretch reads VNHAEASRLNIERMKQIYQQLSR. Lysine 485 participates in a covalent cross-link: Glycyl lysine isopeptide (Lys-Gly) (interchain with G-Cter in ubiquitin). 2 consecutive short sequence motifs (LIR) follow at residues 486-491 and 492-497; these read QIYQQL and SRYRGL. Residues 545–559 show a composition bias toward polar residues; that stretch reads QQTHLLKQGRSSMGT. Residues 545–586 form a disordered region; it reads QQTHLLKQGRSSMGTGLSGGKRPSQEEDTQSIGPKVQRQSTN. A Glycyl lysine isopeptide (Lys-Gly) (interchain with G-Cter in ubiquitin) cross-link involves residue lysine 565. Serine 568 carries the phosphoserine modification.

The protein belongs to the DNA photolyase class-1 family. Component of the circadian core oscillator, which includes the CRY proteins, CLOCK or NPAS2, BMAL1 or BMAL2, CSNK1D and/or CSNK1E, TIMELESS, and the PER proteins. Interacts directly with TIMELESS. Interacts directly with PER1, PER2 and PER3; interaction with PER2 inhibits its ubiquitination and vice versa. Interacts with FBXL21. Interacts with FBXL3. Interacts with CLOCK-BMAL1 independently of PER2 and DNA. Interacts with HDAC1, HDAC2 and SIN3B. Interacts with nuclear receptors AR, NR1D1, NR3C1/GR, RORA and RORC; the interaction with at least NR3C1/GR is ligand dependent. Interacts with PRKDC. Interacts with the G protein subunit alpha GNAS; the interaction may block GPCR-mediated regulation of cAMP concentrations. Interacts with PRMT5. Interacts with EZH2. Interacts with MYBBP1A, DOCK7, HNRNPU, RPL7A, RPL8 and RPS3. Interacts with PPP5C (via TPR repeats). Interacts with MAP1LC3B. Interacts with CLOCK. Interacts with BMAL1. Interacts weakly with HDAC3; this interaction is enhanced in the presence of FBXL3. Interacts with TRIM28, KCTD5 and DDB1. Interacts with FOXO1. Interacts with DTL and DDB1-CUL4A complex. Interacts with HNF4A. Interacts with PSMD2 in a KDM8-dependent manner. Interacts with KDM8 in a FBXL3-dependent manner. Interacts with PPARG in a ligand-dependent manner. Interacts with PPARD (via domain NR LBD) and NR1I2 (via domain NR LBD) in a ligand-dependent manner. Interacts with PPARA, NR1I3 and VDR. FAD serves as cofactor. (6R)-5,10-methylene-5,6,7,8-tetrahydrofolate is required as a cofactor. Post-translationally, phosphorylation on Ser-247 by MAPK is important for the inhibition of CLOCK-BMAL1-mediated transcriptional activity. Phosphorylation by CSNK1E requires interaction with PER1 or PER2. Phosphorylation at Ser-71 and Ser-280 by AMPK decreases protein stability. Phosphorylation at Ser-568 exhibits a robust circadian rhythm with a peak at CT8, increases protein stability, prevents SCF(FBXL3)-mediated degradation and is antagonized by interaction with PRKDC. Ubiquitinated by the SCF(FBXL3) and SCF(FBXL21) complexes, regulating the balance between degradation and stabilization. The SCF(FBXL3) complex is mainly nuclear and mediates ubiquitination and subsequent degradation of CRY1. In contrast, cytoplasmic SCF(FBXL21) complex-mediated ubiquitination leads to stabilize CRY1 and counteract the activity of the SCF(FBXL3) complex. The SCF(FBXL3) and SCF(FBXL21) complexes probably mediate ubiquitination at different Lys residues. Ubiquitination at Lys-11 and Lys-107 are specifically ubiquitinated by the SCF(FBXL21) complex but not by the SCF(FBXL3) complex. Ubiquitination may be inhibited by PER2. Deubiquitinated by USP7. In terms of processing, undergoes autophagy-mediated degradation in the liver in a time-dependent manner. Autophagic degradation of CRY1 (an inhibitor of gluconeogenesis) occurs during periods of reduced feeding allowing induction of gluconeogenesis and maintenance of blood glucose levels.

It is found in the cytoplasm. Its subcellular location is the nucleus. Functionally, transcriptional repressor which forms a core component of the circadian clock. The circadian clock, an internal time-keeping system, regulates various physiological processes through the generation of approximately 24 hour circadian rhythms in gene expression, which are translated into rhythms in metabolism and behavior. It is derived from the Latin roots 'circa' (about) and 'diem' (day) and acts as an important regulator of a wide array of physiological functions including metabolism, sleep, body temperature, blood pressure, endocrine, immune, cardiovascular, and renal function. Consists of two major components: the central clock, residing in the suprachiasmatic nucleus (SCN) of the brain, and the peripheral clocks that are present in nearly every tissue and organ system. Both the central and peripheral clocks can be reset by environmental cues, also known as Zeitgebers (German for 'timegivers'). The predominant Zeitgeber for the central clock is light, which is sensed by retina and signals directly to the SCN. The central clock entrains the peripheral clocks through neuronal and hormonal signals, body temperature and feeding-related cues, aligning all clocks with the external light/dark cycle. Circadian rhythms allow an organism to achieve temporal homeostasis with its environment at the molecular level by regulating gene expression to create a peak of protein expression once every 24 hours to control when a particular physiological process is most active with respect to the solar day. Transcription and translation of core clock components (CLOCK, NPAS2, BMAL1, BMAL2, PER1, PER2, PER3, CRY1 and CRY2) plays a critical role in rhythm generation, whereas delays imposed by post-translational modifications (PTMs) are important for determining the period (tau) of the rhythms (tau refers to the period of a rhythm and is the length, in time, of one complete cycle). A diurnal rhythm is synchronized with the day/night cycle, while the ultradian and infradian rhythms have a period shorter and longer than 24 hours, respectively. Disruptions in the circadian rhythms contribute to the pathology of cardiovascular diseases, cancer, metabolic syndromes and aging. A transcription/translation feedback loop (TTFL) forms the core of the molecular circadian clock mechanism. Transcription factors, CLOCK or NPAS2 and BMAL1 or BMAL2, form the positive limb of the feedback loop, act in the form of a heterodimer and activate the transcription of core clock genes and clock-controlled genes (involved in key metabolic processes), harboring E-box elements (5'-CACGTG-3') within their promoters. The core clock genes: PER1/2/3 and CRY1/2 which are transcriptional repressors form the negative limb of the feedback loop and interact with the CLOCK|NPAS2-BMAL1|BMAL2 heterodimer inhibiting its activity and thereby negatively regulating their own expression. This heterodimer also activates nuclear receptors NR1D1/2 and RORA/B/G, which form a second feedback loop and which activate and repress BMAL1 transcription, respectively. CRY1 and CRY2 have redundant functions but also differential and selective contributions at least in defining the pace of the SCN circadian clock and its circadian transcriptional outputs. More potent transcriptional repressor in cerebellum and liver than CRY2, though more effective in lengthening the period of the SCN oscillator. On its side, CRY2 seems to play a critical role in tuning SCN circadian period by opposing the action of CRY1. With CRY2, is dispensable for circadian rhythm generation but necessary for the development of intercellular networks for rhythm synchrony. Capable of translocating circadian clock core proteins such as PER proteins to the nucleus. Interacts with CLOCK-BMAL1 independently of PER proteins and is found at CLOCK-BMAL1-bound sites, suggesting that CRY may act as a molecular gatekeeper to maintainCLOCK-BMAL1 in a poised and repressed state until the proper time for transcriptional activation. Represses the CLOCK-BMAL1 induced transcription of BHLHE40/DEC1, ATF4, MTA1, KLF10 and NAMPT. May repress circadian target genes expression in collaboration with HDAC1 and HDAC2 through histone deacetylation. Mediates the clock-control activation of ATR and modulates ATR-mediated DNA damage checkpoint. In liver, mediates circadian regulation of cAMP signaling and gluconeogenesis by binding to membrane-coupled G proteins and blocking glucagon-mediated increases in intracellular cAMP concentrations and CREB1 phosphorylation. Inhibits hepatic gluconeogenesis by decreasing nuclear FOXO1 levels that down-regulates gluconeogenic gene expression. Besides its role in the maintenance of the circadian clock, is also involved in the regulation of other processes. Represses glucocorticoid receptor NR3C1/GR-induced transcriptional activity by binding to glucocorticoid response elements (GREs). Plays a key role in glucose and lipid metabolism modulation, in part, through the transcriptional regulation of genes involved in these pathways, such as LEP or ACSL4. Represses PPARD and its target genes in the skeletal muscle and limits exercise capacity. Plays an essential role in the generation of circadian rhythms in the retina. Represses the transcriptional activity of NR1I2. This chain is Cryptochrome-1 (CRY1), found in Macaca fascicularis (Crab-eating macaque).